Reading from the N-terminus, the 523-residue chain is Signal peptide peptidase-like 3 (523 aa).

The signal sequence occupies residues 1–35; sequence MAFPAPSSSSPRRRGRGLAYLLVSVLLLASRVPGA. The Lumenal segment spans residues 36 to 207; that stretch reads AGADSEFEDG…EKPSFDGAIP (172 aa). The PA domain maps to 110–182; it reads SAPLASSIAV…SQSAGRKILS (73 aa). Asparagine 159 carries N-linked (GlcNAc...) asparagine glycosylation. A helical membrane pass occupies residues 208–228; that stretch reads FLWLMAVGSVACASVWSFVVV. Residues 229–254 are Cytoplasmic-facing; that stretch reads GDEDKNAPTLGGEEAADSEIVELQTK. A helical membrane pass occupies residues 255–272; it reads TALVFIVTASLVLLFLFF. At 273–275 the chain is on the lumenal side; that stretch reads FKS. Residues 276 to 298 form a helical membrane-spanning segment; it reads TWSAWLLVVLFCLSGLQGLHYVA. Over 299–321 the chain is Cytoplasmic; the sequence is STLIVRTCDRCREAKVALPVLGN. A helical transmembrane segment spans residues 322–342; the sequence is VTVVTLVILPLALIFVVVWAV. The Lumenal segment spans residues 343–347; the sequence is HQNSP. A helical membrane pass occupies residues 348–368; that stretch reads FAWVGQDLMGICMMILVLQVV. Residues 369–377 are Cytoplasmic-facing; the sequence is HLPNIKVAT. The helical transmembrane segment at 378-398 threads the bilayer; it reads ALLVSAFMYDIFWVFISPFIF. Residue aspartate 387 is part of the active site. The Lumenal segment spans residues 399–430; the sequence is KKSVMITVARGSDEGPSLPMVLKMPKEFDTWN. The chain crosses the membrane as a helical span at residues 431–451; sequence GYDMIGFGDILFPGLLVAFSF. Aspartate 439 is a catalytic residue. Residues 452–465 lie on the Cytoplasmic side of the membrane; the sequence is RYDRANGKDLTDGY. Residues 466 to 486 traverse the membrane as a helical segment; sequence FLCLMIGYAFGLSCTYVGLYL. The Lumenal portion of the chain corresponds to 487–489; the sequence is MKS. A helical membrane pass occupies residues 490 to 510; the sequence is GQPALLYLVPSTLGTIVTLGA. The PAL signature appears at 492–494; it reads PAL. Topologically, residues 511-523 are cytoplasmic; it reads KRGELSQLWNAKV.

It belongs to the peptidase A22B family. In terms of processing, glycosylated.

The protein localises to the endosome membrane. In terms of biological role, intramembrane-cleaving aspartic protease (I-CLiP) that cleaves type II membrane signal peptides in the hydrophobic plane of the membrane. In Oryza sativa subsp. japonica (Rice), this protein is Signal peptide peptidase-like 3 (SPPL3).